The primary structure comprises 369 residues: Core histone macro-H2A.1 (369 aa).

2 positions are modified to N6-lactoyllysine; alternate: Lys-7 and Lys-9. Residues Arg-15–Glu-90 enclose the Histone H2A domain. Residue Lys-18 is modified to N6-methyllysine. The residue at position 116 (Lys-116) is an N6-acetyllysine; alternate. A Glycyl lysine isopeptide (Lys-Gly) (interchain with G-Cter in ubiquitin); alternate cross-link involves residue Lys-116. Lys-117 participates in a covalent cross-link: Glycyl lysine isopeptide (Lys-Gly) (interchain with G-Cter in ubiquitin). Lys-123 is modified (N6-acetyllysine; alternate). The residue at position 123 (Lys-123) is an N6,N6-dimethyllysine; alternate. Residue Lys-123 forms a Glycyl lysine isopeptide (Lys-Gly) (interchain with G-Cter in SUMO2); alternate linkage. Positions Ile-128–Ala-180 are disordered. Thr-129 carries the post-translational modification Phosphothreonine. Over residues Thr-144–Lys-160 the composition is skewed to basic residues. Over residues Val-165–Gly-177 the composition is skewed to polar residues. Lys-167 is covalently cross-linked (Glycyl lysine isopeptide (Lys-Gly) (interchain with G-Cter in SUMO2)). A phosphoserine mark is found at Ser-170 and Ser-173. Thr-178 carries the phosphothreonine modification. The Macro domain maps to Thr-184–Asp-367. A Glycyl lysine isopeptide (Lys-Gly) (interchain with G-Cter in SUMO2) cross-link involves residue Lys-189. 8 residues coordinate a glycoprotein: Asp-203, Ile-204, Val-226, Ser-275, Gly-312, Ser-313, Gly-314, and Asn-316. Lys-320 participates in a covalent cross-link: Glycyl lysine isopeptide (Lys-Gly) (interchain with G-Cter in SUMO2).

Belongs to the histone H2A family. As to quaternary structure, the nucleosome is a histone octamer containing two molecules each of H2A, H2B, H3 and H4 assembled in one H3-H4 heterotetramer and two H2A-H2B heterodimers. Post-translationally, ADP-ribosylated. Monoubiquitinated at either Lys-116 or Lys-117. May also be polyubiquitinated. Ubiquitination is mediated by the CUL3/SPOP E3 complex and does not promote proteasomal degradation. Instead, it is required for enrichment in inactive X chromosome chromatin. As to expression, present in liver (at protein level).

The protein localises to the nucleus. Its subcellular location is the chromosome. Functionally, variant histone H2A which replaces conventional H2A in a subset of nucleosomes where it represses transcription. Nucleosomes wrap and compact DNA into chromatin, limiting DNA accessibility to the cellular machineries which require DNA as a template. Histones thereby play a central role in transcription regulation, DNA repair, DNA replication and chromosomal stability. DNA accessibility is regulated via a complex set of post-translational modifications of histones, also called histone code, and nucleosome remodeling. In terms of biological role, isoform that specifically binds poly-ADP-ribose and O-acetyl-ADP-ribose and plays a key role in NAD(+) metabolism. Able to bind to the ends of poly-ADP-ribose chains created by PARP1 and cap them. This prevents PARP1 from further addition of ADP-ribose and thus limits the consumption of nuclear NAD(+), allowing the cell to maintain proper NAD(+) levels in both the nucleus and the mitochondria to promote proper mitochondrial respiration. In contrast to isoform 1, does not bind poly-ADP-ribose. The chain is Core histone macro-H2A.1 from Gallus gallus (Chicken).